Reading from the N-terminus, the 404-residue chain is uncharacterized protein (404 aa).

Residues 1–22 (MASSINNSSQPTVPSISNNSHG) are compositionally biased toward polar residues. Positions 1 to 110 (MASSINNSSQ…QQTPVKRRRR (110 aa)) are disordered. Position 47 is a phosphothreonine (Thr47). The segment covering 87–104 (SRGSSLKSHLETESQQTP) has biased composition (polar residues). The PHD-type zinc finger occupies 117 to 166 (VDYCSACGGRGLFICCEGCPCSFHLSCLEPPLTPENIPEGSWFCVTCSIK).

This is an uncharacterized protein from Schizosaccharomyces pombe (strain 972 / ATCC 24843) (Fission yeast).